The primary structure comprises 200 residues: Inner membrane-spanning protein YciB (200 aa).

Helical transmembrane passes span 32-52 (FVAT…SYVV), 56-76 (VPLM…LTLV), 93-113 (LFAV…AILF), 126-146 (FLTI…EVIW), and 153-173 (FWVA…AMTQ).

This sequence belongs to the YciB family.

The protein resides in the cell inner membrane. Functionally, plays a role in cell envelope biogenesis, maintenance of cell envelope integrity and membrane homeostasis. The sequence is that of Inner membrane-spanning protein YciB from Afipia carboxidovorans (strain ATCC 49405 / DSM 1227 / KCTC 32145 / OM5) (Oligotropha carboxidovorans).